Reading from the N-terminus, the 515-residue chain is 1-pyrroline-5-carboxylate dehydrogenase (515 aa).

Catalysis depends on residues Glu286 and Cys320.

The protein belongs to the aldehyde dehydrogenase family. RocA subfamily.

It carries out the reaction L-glutamate 5-semialdehyde + NAD(+) + H2O = L-glutamate + NADH + 2 H(+). It functions in the pathway amino-acid degradation; L-proline degradation into L-glutamate; L-glutamate from L-proline: step 2/2. The sequence is that of 1-pyrroline-5-carboxylate dehydrogenase from Geobacillus sp. (strain WCH70).